The chain runs to 273 residues: MDPSKGFEYVAGDYYQTSGVAPPTSNGAGSNVSPYFPYHAYPTSSTNGATGGSMYGTPQQTSAYAMYPPGPGSSPEEAFPEHTTTKIVEGCEAKYNVKGKKMRKPRTIYNSSQLQMLQKKFQKTQYLALPDRAALAHELGLSQTQVKIWFQNRRSKQKKQKGGSSDHASDEEDDDTEESKPESPPMGESVMIQESSEPRTLVSSSIKTEMKEEYPPMTLNEQYASPYLYGSDFSTILPPSQGFPNNALYNTAGAYPSIDYTNGVYQNTLYKYV.

Disordered stretches follow at residues 47-79 and 153-204; these read NGAT…EEAF and RRSK…LVSS. The segment at residues 102–161 is a DNA-binding region (homeobox); the sequence is MRKPRTIYNSSQLQMLQKKFQKTQYLALPDRAALAHELGLSQTQVKIWFQNRRSKQKKQK.

This sequence belongs to the distal-less homeobox family. As to expression, predominantly expressed in the head hypdodermis, neuronal support cells and CAN neurons.

The protein resides in the nucleus. In terms of biological role, probable transcription factor. Binds to the sequence motif 5'-ATAAT-3' in regulatory elements. Required for development of the anterior hypodermis during embryonic morphogenesis for cell adhesion; also affects embryonic and larval viability. Modulates and maintains dopaminergic neuron differentiation. May activate dopamine pathway genes in concert with ETS domain-containing protein ast-1, and homeobox proteins ceh-40 and ceh-20. This is Homeobox protein ceh-43 (ceh-43) from Caenorhabditis elegans.